The primary structure comprises 155 residues: Ribosomal RNA large subunit methyltransferase H (155 aa).

S-adenosyl-L-methionine is bound by residues Leu73, Gly104, and 123–128 (LSPLTL).

It belongs to the RNA methyltransferase RlmH family. Homodimer.

The protein localises to the cytoplasm. It catalyses the reaction pseudouridine(1915) in 23S rRNA + S-adenosyl-L-methionine = N(3)-methylpseudouridine(1915) in 23S rRNA + S-adenosyl-L-homocysteine + H(+). Its function is as follows. Specifically methylates the pseudouridine at position 1915 (m3Psi1915) in 23S rRNA. The polypeptide is Ribosomal RNA large subunit methyltransferase H (Azotobacter vinelandii (strain DJ / ATCC BAA-1303)).